The primary structure comprises 184 residues: Probable chemoreceptor glutamine deamidase CheD (184 aa).

This sequence belongs to the CheD family.

It carries out the reaction L-glutaminyl-[protein] + H2O = L-glutamyl-[protein] + NH4(+). Its function is as follows. Probably deamidates glutamine residues to glutamate on methyl-accepting chemotaxis receptors (MCPs), playing an important role in chemotaxis. The sequence is that of Probable chemoreceptor glutamine deamidase CheD from Rhizobium leguminosarum bv. trifolii (strain WSM2304).